A 338-amino-acid chain; its full sequence is Patr class I histocompatibility antigen, alpha chain G (338 aa).

A signal peptide spans 1–24; the sequence is MVVMAPRTLFLLLSGALTLTETWA. The interval 25–114 is alpha-1; that stretch reads GSHSMRYFSA…LRGYYNQSEA (90 aa). Residues 25–308 lie on the Extracellular side of the membrane; it reads GSHSMRYFSA…KQSSLPTIPI (284 aa). A glycan (N-linked (GlcNAc...) asparagine) is linked at Asn-110. The interval 115-206 is alpha-2; the sequence is SSHTLQWMIG…ENGKEMLQRA (92 aa). Disulfide bonds link Cys-125-Cys-188 and Cys-227-Cys-283. The segment at 207–298 is alpha-3; sequence DPPKTHVTHH…GLPEPLMLRW (92 aa). The Ig-like C1-type domain occupies 209-299; sequence PKTHVTHHPV…LPEPLMLRWK (91 aa). The tract at residues 299 to 308 is connecting peptide; it reads KQSSLPTIPI. Residues 309 to 332 form a helical membrane-spanning segment; the sequence is MGIVAGLVVLAAVVTGAAVAAVLW. The Cytoplasmic segment spans residues 333–338; it reads RKKSSD.

Belongs to the MHC class I family. In terms of assembly, heterodimer of an alpha chain and a beta chain (beta-2-microglobulin). Homodimer; disulfide-linked. Binds to LILRB1 and LILRB2.

It is found in the cell membrane. Its function is as follows. Involved in the presentation of foreign antigens to the immune system. This Pan troglodytes (Chimpanzee) protein is Patr class I histocompatibility antigen, alpha chain G (Patr-G).